The following is a 97-amino-acid chain: Putative pterin-4-alpha-carbinolamine dehydratase (97 aa).

Belongs to the pterin-4-alpha-carbinolamine dehydratase family.

The catalysed reaction is (4aS,6R)-4a-hydroxy-L-erythro-5,6,7,8-tetrahydrobiopterin = (6R)-L-erythro-6,7-dihydrobiopterin + H2O. The protein is Putative pterin-4-alpha-carbinolamine dehydratase of Ruegeria pomeroyi (strain ATCC 700808 / DSM 15171 / DSS-3) (Silicibacter pomeroyi).